The chain runs to 470 residues: mRNA export factor ICP27 homolog (470 aa).

Disordered stretches follow at residues 1-31 and 62-204; these read MALS…TGGD and VGDP…DRLN. Residues 71 to 85 are compositionally biased toward polar residues; sequence VSFSASPQRAQPSNP. 2 stretches are compositionally biased toward basic residues: residues 94 to 107 and 178 to 187; these read HGRR…RRNN and RVHRNRRRGN. Zn(2+) contacts are provided by cysteine 359, histidine 437, cysteine 441, and cysteine 446. Residues 359 to 446 form a CHC2-type zinc finger; sequence CYLSSSGSPT…HKRRCKADTC (88 aa).

It belongs to the HHV-1 ICP27 protein family. Homodimer. Homodimerization is required for transactivation. Associates in a complex with RNA, and host export factors NXF1/TAP and ALYREF; these interactions allow nuclear export of viral transcripts. Interacts with three host shuttling SR proteins SRSF1, SRSF3 and SRSF7. Interacts with host SRPK1. Interacts with IE62; this interaction enhances IE62 transactivation.

The protein localises to the host cytoplasm. The protein resides in the host nucleus. Functionally, multifunctional regulator of the expression of viral genes that mediates nuclear export of viral intronless mRNAs. This immediate early (EI) protein promotes the nuclear export of viral intronless mRNAs by interacting with mRNAs and host NXF1/TAP. This Equine herpesvirus 1 (strain Ab4p) (EHV-1) protein is mRNA export factor ICP27 homolog.